Reading from the N-terminus, the 261-residue chain is Cytochrome c oxidase subunit 3 (261 aa).

Residues methionine 1 to proline 15 lie on the Mitochondrial matrix side of the membrane. A helical membrane pass occupies residues tryptophan 16–methionine 33. Residues tryptophan 34–asparagine 38 are Mitochondrial intermembrane-facing. Residues serine 39–isoleucine 62 form a helical membrane-spanning segment. Residues arginine 63 to lysine 77 are Mitochondrial matrix-facing. A helical membrane pass occupies residues glycine 78–tryptophan 99. At alanine 100–valine 129 the chain is on the mitochondrial intermembrane side. The helical transmembrane segment at proline 130–serine 150 threads the bilayer. Residues leucine 151 to arginine 156 are Mitochondrial matrix-facing. The helical transmembrane segment at asparagine 157–alanine 178 threads the bilayer. Residues serine 179–phenylalanine 198 lie on the Mitochondrial intermembrane side of the membrane. The chain crosses the membrane as a helical span at residues methionine 199–lysine 224. Residues phenylalanine 225–histidine 232 are Mitochondrial matrix-facing. The helical transmembrane segment at phenylalanine 233 to serine 255 threads the bilayer. Over isoleucine 256–serine 261 the chain is Mitochondrial intermembrane.

This sequence belongs to the cytochrome c oxidase subunit 3 family. As to quaternary structure, component of the cytochrome c oxidase (complex IV, CIV), a multisubunit enzyme composed of 14 subunits. The complex is composed of a catalytic core of 3 subunits MT-CO1, MT-CO2 and MT-CO3, encoded in the mitochondrial DNA, and 11 supernumerary subunits COX4I, COX5A, COX5B, COX6A, COX6B, COX6C, COX7A, COX7B, COX7C, COX8 and NDUFA4, which are encoded in the nuclear genome. The complex exists as a monomer or a dimer and forms supercomplexes (SCs) in the inner mitochondrial membrane with NADH-ubiquinone oxidoreductase (complex I, CI) and ubiquinol-cytochrome c oxidoreductase (cytochrome b-c1 complex, complex III, CIII), resulting in different assemblies (supercomplex SCI(1)III(2)IV(1) and megacomplex MCI(2)III(2)IV(2)).

It localises to the mitochondrion inner membrane. The enzyme catalyses 4 Fe(II)-[cytochrome c] + O2 + 8 H(+)(in) = 4 Fe(III)-[cytochrome c] + 2 H2O + 4 H(+)(out). Functionally, component of the cytochrome c oxidase, the last enzyme in the mitochondrial electron transport chain which drives oxidative phosphorylation. The respiratory chain contains 3 multisubunit complexes succinate dehydrogenase (complex II, CII), ubiquinol-cytochrome c oxidoreductase (cytochrome b-c1 complex, complex III, CIII) and cytochrome c oxidase (complex IV, CIV), that cooperate to transfer electrons derived from NADH and succinate to molecular oxygen, creating an electrochemical gradient over the inner membrane that drives transmembrane transport and the ATP synthase. Cytochrome c oxidase is the component of the respiratory chain that catalyzes the reduction of oxygen to water. Electrons originating from reduced cytochrome c in the intermembrane space (IMS) are transferred via the dinuclear copper A center (CU(A)) of subunit 2 and heme A of subunit 1 to the active site in subunit 1, a binuclear center (BNC) formed by heme A3 and copper B (CU(B)). The BNC reduces molecular oxygen to 2 water molecules using 4 electrons from cytochrome c in the IMS and 4 protons from the mitochondrial matrix. The protein is Cytochrome c oxidase subunit 3 (mt-Co3) of Mus musculus (Mouse).